Reading from the N-terminus, the 372-residue chain is Cobalt-precorrin-5B C(1)-methyltransferase (372 aa).

Belongs to the CbiD family.

The catalysed reaction is Co-precorrin-5B + S-adenosyl-L-methionine = Co-precorrin-6A + S-adenosyl-L-homocysteine. The protein operates within cofactor biosynthesis; adenosylcobalamin biosynthesis; cob(II)yrinate a,c-diamide from sirohydrochlorin (anaerobic route): step 6/10. Functionally, catalyzes the methylation of C-1 in cobalt-precorrin-5B to form cobalt-precorrin-6A. The polypeptide is Cobalt-precorrin-5B C(1)-methyltransferase (Prochlorococcus marinus (strain MIT 9515)).